A 588-amino-acid polypeptide reads, in one-letter code: Transmembrane protein 201 homolog (588 aa).

The Nuclear segment spans residues 1-212 (MEVAAAVGVI…FFFAGGSTCE (212 aa)). The chain crosses the membrane as a helical span at residues 213–233 (ALHFGCLISSIILFLANIDFL). Residues 234 to 254 (QQDAGASLINLPKALQDILPE) lie on the Perinuclear space side of the membrane. A helical membrane pass occupies residues 255-275 (VYKYSFVINFLIFTTHLIAAF). Residues 276–280 (NNKCR) are Nuclear-facing. Residues 281 to 301 (VTLPDLLLPILLILAMLTVLT) form a helical membrane-spanning segment. Residues 302–309 (SSDNLSQD) lie on the Perinuclear space side of the membrane. A helical transmembrane segment spans residues 310-330 (VALVRGACASFSTILSMAVTL). The Nuclear segment spans residues 331 to 564 (LPRKKLHKKR…SGAWQCRVIG (234 aa)). Residues 378-457 (RRSPHTPSAS…QSTRSSHFKP (80 aa)) are disordered. Positions 384–396 (PSASPPAMNSSPP) are enriched in low complexity. 2 stretches are compositionally biased toward polar residues: residues 418 to 430 (NMQSYQTKPNNHV) and 441 to 452 (MAAQSVAQSTRS). A helical transmembrane segment spans residues 565–585 (ILFALVFIVLIMQIGLFYVLF). Residues 586 to 588 (TRN) lie on the Perinuclear space side of the membrane.

This sequence belongs to the TMEM201 family.

Its subcellular location is the nucleus inner membrane. In terms of biological role, plays a role in nuclear migration in hypodermal cells. The sequence is that of Transmembrane protein 201 homolog from Caenorhabditis elegans.